Reading from the N-terminus, the 490-residue chain is Cytochrome P450 2C13, male-specific (490 aa).

Residue C435 coordinates heme.

The protein belongs to the cytochrome P450 family. The cofactor is heme. Liver, and to a lesser extent in prostate, kidney, heart and brain.

The protein localises to the endoplasmic reticulum membrane. It is found in the microsome membrane. It catalyses the reaction an organic molecule + reduced [NADPH--hemoprotein reductase] + O2 = an alcohol + oxidized [NADPH--hemoprotein reductase] + H2O + H(+). Its function is as follows. Cytochromes P450 are a group of heme-thiolate monooxygenases. In liver microsomes, this enzyme is involved in an NADPH-dependent electron transport pathway. It oxidizes a variety of structurally unrelated compounds, including steroids, fatty acids, and xenobiotics. This Rattus norvegicus (Rat) protein is Cytochrome P450 2C13, male-specific (Cyp2c13).